Consider the following 314-residue polypeptide: ATP synthase gamma chain (314 aa).

It belongs to the ATPase gamma chain family. F-type ATPases have 2 components, CF(1) - the catalytic core - and CF(0) - the membrane proton channel. CF(1) has five subunits: alpha(3), beta(3), gamma(1), delta(1), epsilon(1). CF(0) has three main subunits: a, b and c.

The protein localises to the cellular thylakoid membrane. Functionally, produces ATP from ADP in the presence of a proton gradient across the membrane. The gamma chain is believed to be important in regulating ATPase activity and the flow of protons through the CF(0) complex. The polypeptide is ATP synthase gamma chain (Picosynechococcus sp. (strain ATCC 27264 / PCC 7002 / PR-6) (Agmenellum quadruplicatum)).